The sequence spans 350 residues: N(4)-bis(aminopropyl)spermidine synthase (350 aa).

The protein belongs to the branched-chain polyamine synthase family.

The protein localises to the cytoplasm. The enzyme catalyses 2 S-adenosyl 3-(methylsulfanyl)propylamine + spermidine = N(4)-bis(aminopropyl)spermidine + 2 S-methyl-5'-thioadenosine + 2 H(+). Its pathway is amine and polyamine biosynthesis. In terms of biological role, involved in the biosynthesis of branched-chain polyamines, which support the growth of thermophiles under high-temperature conditions. Catalyzes the sequential condensation of spermidine with the aminopropyl groups of decarboxylated S-adenosylmethionines to produce N(4)-bis(aminopropyl)spermidine via N(4)-aminopropylspermidine. This Methanocaldococcus jannaschii (strain ATCC 43067 / DSM 2661 / JAL-1 / JCM 10045 / NBRC 100440) (Methanococcus jannaschii) protein is N(4)-bis(aminopropyl)spermidine synthase.